Here is a 65-residue protein sequence, read N- to C-terminus: Metallothionein (65 aa).

The protein belongs to the metallothionein superfamily. Type 4 family.

Its function is as follows. Metallothioneins have a high content of cysteine residues that bind various heavy metals. The sequence is that of Metallothionein from Paracentrotus lividus (Common sea urchin).